A 153-amino-acid chain; its full sequence is Cytochrome c-type biogenesis protein CcmE (153 aa).

At 1 to 7 the chain is on the cytoplasmic side; it reads MKPRHKR. The chain crosses the membrane as a helical; Signal-anchor for type II membrane protein span at residues 8-28; the sequence is LAIAGGVLVAVGAIATLVLNA. The Periplasmic portion of the chain corresponds to 29–153; the sequence is FQSNLVFFYS…SSQAATGDPR (125 aa). Positions 120 and 124 each coordinate heme. The interval 130 to 153 is disordered; sequence AEALKRAKEGGQMQSSQAATGDPR. The segment covering 141–153 has biased composition (polar residues); that stretch reads QMQSSQAATGDPR.

The protein belongs to the CcmE/CycJ family.

Its subcellular location is the cell inner membrane. Heme chaperone required for the biogenesis of c-type cytochromes. Transiently binds heme delivered by CcmC and transfers the heme to apo-cytochromes in a process facilitated by CcmF and CcmH. In Leptothrix cholodnii (strain ATCC 51168 / LMG 8142 / SP-6) (Leptothrix discophora (strain SP-6)), this protein is Cytochrome c-type biogenesis protein CcmE.